The sequence spans 143 residues: MSLSSKDKATVKEFFGKMSTRSDDIGAEALSRLVAVYPQTKSYFSHWKDASPGSAPVRKHGITIMGGVYDAVTKIDDLKGGLLSLSELHAFMLRVDPVNFKLLAHCMLVCMSMVFPEEFTPQVHVAVDKFLAQLALALAEKYR.

At Ser-2 the chain carries N-acetylserine. A Globin domain is found at 2–143 (SLSSKDKATV…LALALAEKYR (142 aa)). An O2-binding site is contributed by His-60. His-89 lines the heme b pocket.

This sequence belongs to the globin family. As to quaternary structure, hb 1 is a heterotetramer of two alpha-1 and two beta-1 chains. Red blood cells.

Its function is as follows. Involved in oxygen transport from gills to the various peripheral tissues. This is Hemoglobin subunit alpha-1 (hba1) from Arctogadus glacialis (Arctic cod).